A 464-amino-acid chain; its full sequence is Glutamate--tRNA ligase 2 (464 aa).

The 'HIGH' region signature appears at 11-21; that stretch reads PSPTGFLHIGS. Positions 240 to 244 match the 'KMSKS' region motif; it reads KLSKR. K243 lines the ATP pocket.

The protein belongs to the class-I aminoacyl-tRNA synthetase family. Glutamate--tRNA ligase type 1 subfamily. As to quaternary structure, monomer.

It is found in the cytoplasm. It carries out the reaction tRNA(Glu) + L-glutamate + ATP = L-glutamyl-tRNA(Glu) + AMP + diphosphate. Catalyzes the attachment of glutamate to tRNA(Glu) in a two-step reaction: glutamate is first activated by ATP to form Glu-AMP and then transferred to the acceptor end of tRNA(Glu). This is Glutamate--tRNA ligase 2 from Rickettsia bellii (strain OSU 85-389).